The following is a 400-amino-acid chain: Acetate kinase (400 aa).

A Mg(2+)-binding site is contributed by asparagine 10. Residue lysine 17 coordinates ATP. A substrate-binding site is contributed by arginine 91. Aspartate 150 (proton donor/acceptor) is an active-site residue. ATP-binding positions include 210–214 (HLGNG), 285–287 (DCR), and 333–337 (GIGEN). Residue glutamate 387 coordinates Mg(2+).

This sequence belongs to the acetokinase family. In terms of assembly, homodimer. Mg(2+) serves as cofactor. The cofactor is Mn(2+).

The protein localises to the cytoplasm. It catalyses the reaction acetate + ATP = acetyl phosphate + ADP. The protein operates within metabolic intermediate biosynthesis; acetyl-CoA biosynthesis; acetyl-CoA from acetate: step 1/2. Catalyzes the formation of acetyl phosphate from acetate and ATP. Can also catalyze the reverse reaction. In Yersinia pseudotuberculosis serotype I (strain IP32953), this protein is Acetate kinase.